Here is a 266-residue protein sequence, read N- to C-terminus: Thymidylate synthase (266 aa).

Arg24 is a binding site for dUMP. His54 contacts (6R)-5,10-methylene-5,6,7,8-tetrahydrofolate. 129–130 (RR) contributes to the dUMP binding site. Cys149 acts as the Nucleophile in catalysis. DUMP contacts are provided by residues 169–172 (RSAD), Asn180, and 210–212 (HIY). Asp172 provides a ligand contact to (6R)-5,10-methylene-5,6,7,8-tetrahydrofolate. (6R)-5,10-methylene-5,6,7,8-tetrahydrofolate is bound at residue Ala265.

The protein belongs to the thymidylate synthase family. Bacterial-type ThyA subfamily. As to quaternary structure, homodimer.

Its subcellular location is the cytoplasm. It carries out the reaction dUMP + (6R)-5,10-methylene-5,6,7,8-tetrahydrofolate = 7,8-dihydrofolate + dTMP. Its pathway is pyrimidine metabolism; dTTP biosynthesis. Its function is as follows. Catalyzes the reductive methylation of 2'-deoxyuridine-5'-monophosphate (dUMP) to 2'-deoxythymidine-5'-monophosphate (dTMP) while utilizing 5,10-methylenetetrahydrofolate (mTHF) as the methyl donor and reductant in the reaction, yielding dihydrofolate (DHF) as a by-product. This enzymatic reaction provides an intracellular de novo source of dTMP, an essential precursor for DNA biosynthesis. This Mycobacterium avium (strain 104) protein is Thymidylate synthase.